A 159-amino-acid polypeptide reads, in one-letter code: Urease accessory protein UreE (159 aa).

The segment at 140 to 159 (GAYHGTGHHHHGHGHDPHHG) is disordered.

The protein belongs to the UreE family.

Its subcellular location is the cytoplasm. Its function is as follows. Involved in urease metallocenter assembly. Binds nickel. Probably functions as a nickel donor during metallocenter assembly. The polypeptide is Urease accessory protein UreE (Sinorhizobium fredii (strain NBRC 101917 / NGR234)).